The following is a 325-amino-acid chain: Lipoyl synthase (325 aa).

[4Fe-4S] cluster-binding residues include Cys72, Cys77, Cys83, Cys98, Cys102, Cys105, and Ser312. The Radical SAM core domain occupies 84–301; sequence FAGGTATFMI…AEEGERMGFK (218 aa).

Belongs to the radical SAM superfamily. Lipoyl synthase family. It depends on [4Fe-4S] cluster as a cofactor.

It localises to the cytoplasm. The catalysed reaction is [[Fe-S] cluster scaffold protein carrying a second [4Fe-4S](2+) cluster] + N(6)-octanoyl-L-lysyl-[protein] + 2 oxidized [2Fe-2S]-[ferredoxin] + 2 S-adenosyl-L-methionine + 4 H(+) = [[Fe-S] cluster scaffold protein] + N(6)-[(R)-dihydrolipoyl]-L-lysyl-[protein] + 4 Fe(3+) + 2 hydrogen sulfide + 2 5'-deoxyadenosine + 2 L-methionine + 2 reduced [2Fe-2S]-[ferredoxin]. It participates in protein modification; protein lipoylation via endogenous pathway; protein N(6)-(lipoyl)lysine from octanoyl-[acyl-carrier-protein]: step 2/2. Catalyzes the radical-mediated insertion of two sulfur atoms into the C-6 and C-8 positions of the octanoyl moiety bound to the lipoyl domains of lipoate-dependent enzymes, thereby converting the octanoylated domains into lipoylated derivatives. The polypeptide is Lipoyl synthase (Azotobacter vinelandii (strain DJ / ATCC BAA-1303)).